Reading from the N-terminus, the 164-residue chain is uncharacterized protein (164 aa).

The HTH marR-type domain occupies 28 to 157 (EAEILYQLQG…LIDVLARMRN (130 aa)). The H-T-H motif DNA-binding region spans 71-94 (QSDLQKKVNIDSAAVTRHLKQLES).

This is an uncharacterized protein from Bacillus subtilis (strain 168).